The chain runs to 105 residues: Resistin-like beta (105 aa).

The signal sequence occupies residues 1-23 (MKPTLCFLFILVSLFPLIVPGNA). Cystine bridges form between Cys-49–Cys-102, Cys-61–Cys-101, Cys-70–Cys-87, Cys-72–Cys-89, and Cys-76–Cys-91.

The protein belongs to the resistin/FIZZ family. Homodimer; disulfide-linked. Heterodimer with RETNLG. In terms of tissue distribution, strongly expressed in colon, and at lower levels in ileum. In colon, found throughout the crypt and surface epithelium and in goblet cells (at protein level). Specific to the gastrointestinal tract; not detected in other tissues tested.

It is found in the secreted. Functionally, probable hormone. The sequence is that of Resistin-like beta (Retnlb) from Mus musculus (Mouse).